Reading from the N-terminus, the 420-residue chain is Caspase-12 (420 aa).

The 92-residue stretch at 1-92 (MAAKRTHERD…QLSLQFPSDD (92 aa)) folds into the CARD domain. Residues S85 and S90 each carry the phosphoserine modification. Positions 93–115 (EEDELQKMFTPSSASESRGKVED) are disordered. Catalysis depends on residues H251 and C299.

Belongs to the peptidase C14A family. As to quaternary structure, heterotetramer that consists of two anti-parallel arranged heterodimers, each one formed by two subunits (Potential). May interact with TRAF2.

Its function is as follows. Involved in the activation cascade of caspases responsible for apoptosis execution. The polypeptide is Caspase-12 (Casp12) (Rattus norvegicus (Rat)).